The following is a 330-amino-acid chain: NADH-quinone oxidoreductase subunit H (330 aa).

The next 8 membrane-spanning stretches (helical) occupy residues 3–23 (AAFV…FSAL), 76–96 (PVFM…MAAI), 118–138 (VGLL…LLAG), 161–181 (EVVT…ISLV), 188–208 (AGGM…LFLI), 244–264 (FFIG…LIFL), 272–292 (FIPG…LFLW), and 307–327 (WLCW…TGIV).

The protein belongs to the complex I subunit 1 family. In terms of assembly, NDH-1 is composed of 14 different subunits. Subunits NuoA, H, J, K, L, M, N constitute the membrane sector of the complex.

It localises to the cell inner membrane. It carries out the reaction a quinone + NADH + 5 H(+)(in) = a quinol + NAD(+) + 4 H(+)(out). Functionally, NDH-1 shuttles electrons from NADH, via FMN and iron-sulfur (Fe-S) centers, to quinones in the respiratory chain. The immediate electron acceptor for the enzyme in this species is believed to be ubiquinone. Couples the redox reaction to proton translocation (for every two electrons transferred, four hydrogen ions are translocated across the cytoplasmic membrane), and thus conserves the redox energy in a proton gradient. This subunit may bind ubiquinone. In Nitratiruptor sp. (strain SB155-2), this protein is NADH-quinone oxidoreductase subunit H.